Consider the following 288-residue polypeptide: MKIAIVIDSSSGLTKEQANKRGWYFLPLNIDIDEKTYKDGIDLDNKNFFEIFKKNSKTSTSASSRGEIISLFDDITSKYDKVVVFPISYKLSSQYQNLDLIAREYKNIHIVKSKHLSFLTIVQLIKFEKAIGQNQSFDEELKKLSHWDESQKVLLIPEYNDALVAGGRLSPKAAALAKVLKVVPIIKFENGELLKEGKGISFQKTLTKLISSLSGKYSKDSKNYFPVILHAQNSNISFYEEHFLNEFGKKPLILSLPSVISVHTGLGAIAISLVKVDKDVIDQIVEHF.

The region spanning 3–275 (IAIVIDSSSG…LGAIAISLVK (273 aa)) is the DegV domain. Hexadecanoate-binding residues include serine 61 and serine 92.

Its function is as follows. May bind long-chain fatty acids, such as palmitate, and may play a role in lipid transport or fatty acid metabolism. The sequence is that of DegV domain-containing protein MYPU_3590 from Mycoplasmopsis pulmonis (strain UAB CTIP) (Mycoplasma pulmonis).